Reading from the N-terminus, the 256-residue chain is Gluconate 5-dehydrogenase (256 aa).

15-39 serves as a coordination point for NADP(+); it reads LVTGASRGIGLTLAKGLARYGAEVV. Residue Ser147 participates in substrate binding. The active-site Proton acceptor is the Tyr160.

The protein belongs to the short-chain dehydrogenases/reductases (SDR) family. As to quaternary structure, homodimer.

Its subcellular location is the cytoplasm. The enzyme catalyses D-gluconate + NADP(+) = 5-dehydro-D-gluconate + NADPH + H(+). In terms of biological role, catalyzes the reversible NADP-dependent oxidation of gluconate to 5-ketogluconate. Is involved in the non-phosphorylative, ketogenic oxidation of glucose. Is almost inactive with NAD as cosubstrate. Displays high substrate specificity since D-Glucose, D-sorbitol, and D-mannitol are not oxidized by the enzyme, and 2-ketogluconate and L-sorbose are not reduced. Can accept D-fructose as a substrate, with a rate that is only 10% of the rate of 5-ketogluconate reduction. The polypeptide is Gluconate 5-dehydrogenase (Gluconobacter oxydans (strain 621H) (Gluconobacter suboxydans)).